Here is a 314-residue protein sequence, read N- to C-terminus: SERTA domain-containing protein 2 (314 aa).

Positions 33-80 (YTLQRQTIFNISLMKLYNHRPLTEPSLQKTVLINNMLRRIQEELKQEG) constitute an SERTA domain. Disordered stretches follow at residues 77 to 119 (KQEG…HPCD) and 181 to 222 (PTST…SKLM). The segment covering 87–97 (TPSSQPTTEPS) has biased composition (polar residues). Over residues 182–193 (TSTSTEAATAAT) the composition is skewed to low complexity. Residues 210 to 221 (GPQESRADDSKL) are compositionally biased toward basic and acidic residues. The segment at 235 to 311 (TGFLTDLTLD…TELDHIMEVL (77 aa)) is required for transactivation activity. A Nuclear export signal (NES) motif is present at residues 238 to 243 (LTDLTL).

As to quaternary structure, interacts with XPO1; which mediates nuclear export. Interacts with TFDP1; modulates transactivation activity of TFDP1/E2F complexes. In terms of processing, polyubiquitinated, which promotes proteasomal degradation. As to expression, expressed in adipose tissue.

The protein localises to the nucleus. It localises to the cytoplasm. Its function is as follows. Acts at E2F-responsive promoters as coregulator to integrate signals provided by PHD- and/or bromodomain-containing transcription factors. May act as coactivator as well as corepressor of E2F1-TFDP1 and E2F4-TFDP1 complexes on E2F consensus binding sites, which would activate or inhibit E2F-target genes expression. Modulates fat storage by down-regulating the expression of key genes involved in adipocyte lipolysis, thermogenesis and oxidative metabolism. This chain is SERTA domain-containing protein 2 (SERTAD2), found in Homo sapiens (Human).